The sequence spans 91 residues: Small ribosomal subunit protein uS17 (91 aa).

Belongs to the universal ribosomal protein uS17 family. Part of the 30S ribosomal subunit.

Its function is as follows. One of the primary rRNA binding proteins, it binds specifically to the 5'-end of 16S ribosomal RNA. The chain is Small ribosomal subunit protein uS17 from Thermobifida fusca (strain YX).